Reading from the N-terminus, the 88-residue chain is HssA/B-like protein 17 (88 aa).

The protein belongs to the hssA/B family.

The protein is HssA/B-like protein 17 (hssl17) of Dictyostelium discoideum (Social amoeba).